The sequence spans 121 residues: MARIAGVNIPNHQHTEIGLTAIFGIGRTRARSICVASGVAFSKKVKDLTDADLEKLREEVGKFVVEGDLRREVTMNIKRLMDLGCYRGVRHRKGLPLRGQRTRTNARTRKGPRRAAQALKK.

Residues 94 to 121 are disordered; that stretch reads GLPLRGQRTRTNARTRKGPRRAAQALKK.

Belongs to the universal ribosomal protein uS13 family. In terms of assembly, part of the 30S ribosomal subunit. Forms a loose heterodimer with protein S19. Forms two bridges to the 50S subunit in the 70S ribosome.

Functionally, located at the top of the head of the 30S subunit, it contacts several helices of the 16S rRNA. In the 70S ribosome it contacts the 23S rRNA (bridge B1a) and protein L5 of the 50S subunit (bridge B1b), connecting the 2 subunits; these bridges are implicated in subunit movement. Contacts the tRNAs in the A and P-sites. The polypeptide is Small ribosomal subunit protein uS13 (Burkholderia mallei (strain NCTC 10247)).